Consider the following 220-residue polypeptide: Deoxyribose-phosphate aldolase (220 aa).

The Proton donor/acceptor role is filled by aspartate 89. Residue lysine 151 is the Schiff-base intermediate with acetaldehyde of the active site. Lysine 180 (proton donor/acceptor) is an active-site residue.

The protein belongs to the DeoC/FbaB aldolase family. DeoC type 1 subfamily.

The protein localises to the cytoplasm. The catalysed reaction is 2-deoxy-D-ribose 5-phosphate = D-glyceraldehyde 3-phosphate + acetaldehyde. Its pathway is carbohydrate degradation; 2-deoxy-D-ribose 1-phosphate degradation; D-glyceraldehyde 3-phosphate and acetaldehyde from 2-deoxy-alpha-D-ribose 1-phosphate: step 2/2. In terms of biological role, catalyzes a reversible aldol reaction between acetaldehyde and D-glyceraldehyde 3-phosphate to generate 2-deoxy-D-ribose 5-phosphate. The chain is Deoxyribose-phosphate aldolase from Lactococcus lactis subsp. lactis (strain IL1403) (Streptococcus lactis).